Reading from the N-terminus, the 406-residue chain is Cysteine desulfurase (406 aa).

Residue Lys-226 is modified to N6-(pyridoxal phosphate)lysine. The Cysteine persulfide intermediate role is filled by Cys-364.

It belongs to the class-V pyridoxal-phosphate-dependent aminotransferase family. Csd subfamily. Homodimer. Interacts with SufE and the SufBCD complex composed of SufB, SufC and SufD. The interaction with SufE is required to mediate the direct transfer of the sulfur atom from the S-sulfanylcysteine. Pyridoxal 5'-phosphate serves as cofactor.

Its subcellular location is the cytoplasm. It carries out the reaction (sulfur carrier)-H + L-cysteine = (sulfur carrier)-SH + L-alanine. The catalysed reaction is L-selenocysteine + AH2 = hydrogenselenide + L-alanine + A + H(+). Its pathway is cofactor biosynthesis; iron-sulfur cluster biosynthesis. Cysteine desulfurases mobilize the sulfur from L-cysteine to yield L-alanine, an essential step in sulfur metabolism for biosynthesis of a variety of sulfur-containing biomolecules. Component of the suf operon, which is activated and required under specific conditions such as oxidative stress and iron limitation. Acts as a potent selenocysteine lyase in vitro, that mobilizes selenium from L-selenocysteine. Selenocysteine lyase activity is however unsure in vivo. This is Cysteine desulfurase from Escherichia coli O45:K1 (strain S88 / ExPEC).